Consider the following 307-residue polypeptide: MEARAGLAMQSRAAVGVGAGPGVGRRGRAVIRVGKRPTAASLRVGGPAGPAAAKPLAPLYCLKASRGHDSLHNSVDEALLLKRKSEEVLFYLNGRCIYLVGMMGSGKSTVAKILAEVLGYSFFDSDKLVEQAVGMPSVAQIFKEHSEAFFRDNESSVLRDLSSMRRLVVATGGGAVIRPVNWKYMKKGLSVWLDVPLDALARRIAQVGTASRPLLDQPSSDPYTAAFSKLSMLAEQRGDAYANADARVSLEEIAAKQGHDDVSKLTPTDIAIEALLKIENFVTEHSTSSGPVGDLIVDSQNRRTKAL.

Residues 1 to 60 (MEARAGLAMQSRAAVGVGAGPGVGRRGRAVIRVGKRPTAASLRVGGPAGPAAAKPLAPLY) constitute a chloroplast transit peptide. 101-108 (GMMGSGKS) provides a ligand contact to ATP. Serine 108 contacts Mg(2+). Substrate is bound by residues aspartate 126, arginine 151, and glycine 173. ATP is bound at residue arginine 212. Residues 285-307 (HSTSSGPVGDLIVDSQNRRTKAL) are disordered.

Belongs to the shikimate kinase family. It depends on Mg(2+) as a cofactor. In terms of tissue distribution, expressed in panicles.

It is found in the plastid. The protein localises to the chloroplast. It carries out the reaction shikimate + ATP = 3-phosphoshikimate + ADP + H(+). The protein operates within metabolic intermediate biosynthesis; chorismate biosynthesis; chorismate from D-erythrose 4-phosphate and phosphoenolpyruvate: step 5/7. In terms of biological role, catalyzes the specific phosphorylation of the 3-hydroxyl group of shikimic acid using ATP as a cosubstrate. The protein is Shikimate kinase 2, chloroplastic (SK2) of Oryza sativa subsp. japonica (Rice).